Consider the following 610-residue polypeptide: Replication factor C large subunit (610 aa).

55–62 is an ATP binding site; the sequence is GPAGIGKT. Composition is skewed to basic and acidic residues over residues 467–478, 502–515, and 594–603; these read EKEGNASAEKPE, LPEK…KLPE, and DGSKKAEPKN. Positions 467-610 are disordered; that stretch reads EKEGNASAEK…PKNQKTLFDF (144 aa).

This sequence belongs to the activator 1 small subunits family. RfcL subfamily. As to quaternary structure, heteromultimer composed of small subunits (RfcS) and large subunits (RfcL).

In terms of biological role, part of the RFC clamp loader complex which loads the PCNA sliding clamp onto DNA. The sequence is that of Replication factor C large subunit from Methanosarcina mazei (strain ATCC BAA-159 / DSM 3647 / Goe1 / Go1 / JCM 11833 / OCM 88) (Methanosarcina frisia).